The chain runs to 601 residues: Secretogranin-2 (601 aa).

An N-terminal signal peptide occupies residues 1 to 30 (MSSQRNYCLAGCLSSCILVILMSFSDAASF). Residues 89–109 (EQKDTQALSTDTAKSPTSDDE) are disordered. Polar residues predominate over residues 93–104 (TQALSTDTAKSP). Sulfotyrosine is present on tyrosine 151. Residues 258 to 273 (VESQTQEELKESKEEV) show a composition bias toward basic and acidic residues. Positions 258–307 (VESQTQEELKESKEEVEKTDDMEDEIKRSGLLGLQDEEPEKDTKEQESEN) are disordered.

Belongs to the chromogranin/secretogranin protein family.

It is found in the secreted. In terms of biological role, neuroendocrine protein of the granin family that regulates the biogenesis of secretory granules. In Pelophylax ridibundus (Marsh frog), this protein is Secretogranin-2.